A 462-amino-acid polypeptide reads, in one-letter code: Chitinase 1 (462 aa).

Positions 1–17 (MILNLIILLAISIVASA) are cleaved as a signal peptide. In terms of domain architecture, GH18 spans 18–291 (SNIAAYWGQN…NQLHQALSGS (274 aa)). The N-linked (GlcNAc...) asparagine glycan is linked to Asn-57. Glu-147 functions as the Proton donor in the catalytic mechanism.

This sequence belongs to the glycosyl hydrolase 18 family. Chitinase class V subfamily.

It is found in the secreted. It carries out the reaction Random endo-hydrolysis of N-acetyl-beta-D-glucosaminide (1-&gt;4)-beta-linkages in chitin and chitodextrins.. In terms of biological role, chitinase involved in the remodeling of chitin in the fungal cell wall. Plays a role in cell separation. This Candida albicans (strain SC5314 / ATCC MYA-2876) (Yeast) protein is Chitinase 1 (CHT1).